The sequence spans 365 residues: Aminomethyltransferase (365 aa).

This sequence belongs to the GcvT family. As to quaternary structure, the glycine cleavage system is composed of four proteins: P, T, L and H.

The enzyme catalyses N(6)-[(R)-S(8)-aminomethyldihydrolipoyl]-L-lysyl-[protein] + (6S)-5,6,7,8-tetrahydrofolate = N(6)-[(R)-dihydrolipoyl]-L-lysyl-[protein] + (6R)-5,10-methylene-5,6,7,8-tetrahydrofolate + NH4(+). Functionally, the glycine cleavage system catalyzes the degradation of glycine. The protein is Aminomethyltransferase of Serratia proteamaculans (strain 568).